We begin with the raw amino-acid sequence, 1519 residues long: Putative lipoprotein YghJ (1519 aa).

The signal sequence occupies residues 1-23 (MNKKFKYKKSLLAAILSATLLAG). 2 disordered regions span residues 22 to 107 (AGCD…GATC) and 226 to 247 (NAAT…TTPG). Residue Cys-24 is the site of N-palmitoyl cysteine attachment. Cys-24 carries S-diacylglycerol cysteine lipidation. Residues 31–42 (SSSDTPPVDSGT) are compositionally biased toward low complexity. Pro residues predominate over residues 51-77 (DPTPNPEPTPEPTPDPEPTPEPIPDPE). Over residues 97-107 (GGSQRVTGATC) the composition is skewed to polar residues. The span at 234–247 (STHTSPVVPVTTPG) shows a compositional bias: low complexity. Positions 1080–1380 (GNMQSTGLWA…MYAQLKEWAE (301 aa)) constitute a Peptidase M60 domain. Positions 1497–1519 (DLPKPEQGPETINQVTEHKMSAE) are disordered.

This sequence to V.cholerae AcfD (VC_0845).

The protein resides in the cell membrane. Its function is as follows. May be a substrate of the type II secretion system beta (T2SS-beta). The polypeptide is Putative lipoprotein YghJ (yghJ) (Escherichia coli O78:H11 (strain H10407 / ETEC)).